The following is a 389-amino-acid chain: tRNA-specific 2-thiouridylase MnmA (389 aa).

ATP contacts are provided by residues 34 to 41 (AMSGGVDS) and L60. C128 functions as the Nucleophile in the catalytic mechanism. An intrachain disulfide couples C128 to C225. G152 lines the ATP pocket. An interaction with tRNA region spans residues 174–176 (RDQ). The active-site Cysteine persulfide intermediate is C225.

Belongs to the MnmA/TRMU family.

Its subcellular location is the cytoplasm. It catalyses the reaction S-sulfanyl-L-cysteinyl-[protein] + uridine(34) in tRNA + AH2 + ATP = 2-thiouridine(34) in tRNA + L-cysteinyl-[protein] + A + AMP + diphosphate + H(+). Functionally, catalyzes the 2-thiolation of uridine at the wobble position (U34) of tRNA, leading to the formation of s(2)U34. The protein is tRNA-specific 2-thiouridylase MnmA of Paracoccus denitrificans (strain Pd 1222).